Reading from the N-terminus, the 490-residue chain is Bifunctional pantoate ligase/cytidylate kinase (490 aa).

1–8 (MGGLHQGH) lines the ATP pocket. Positions 1-253 (MGGLHQGHAR…CGETRLIDHV (253 aa)) are pantoate--beta-alanine ligase. The active-site Proton donor is His-8. (R)-pantoate is bound at residue Gln-35. Gln-35 serves as a coordination point for beta-alanine. 124–127 (GEKD) lines the ATP pocket. Residue Gln-130 participates in (R)-pantoate binding. ATP-binding positions include Val-153 and 161 to 164 (ASSR). A cytidylate kinase region spans residues 254 to 490 (FIMTRSPIVA…AKEIWPTPQG (237 aa)).

This sequence in the N-terminal section; belongs to the pantothenate synthetase family. The protein in the C-terminal section; belongs to the cytidylate kinase family. Type 1 subfamily.

It localises to the cytoplasm. The catalysed reaction is (R)-pantoate + beta-alanine + ATP = (R)-pantothenate + AMP + diphosphate + H(+). It catalyses the reaction CMP + ATP = CDP + ADP. The enzyme catalyses dCMP + ATP = dCDP + ADP. It participates in cofactor biosynthesis; (R)-pantothenate biosynthesis; (R)-pantothenate from (R)-pantoate and beta-alanine: step 1/1. Its function is as follows. Catalyzes the condensation of pantoate with beta-alanine in an ATP-dependent reaction via a pantoyl-adenylate intermediate. Catalyzes the transfer of a phosphate group from ATP to either CMP or dCMP to form CDP or dCDP and ADP, respectively. The chain is Bifunctional pantoate ligase/cytidylate kinase from Synechococcus sp. (strain WH7803).